A 1175-amino-acid chain; its full sequence is Major DNA-binding protein (1175 aa).

The segment at 496-509 (CSLCDRASRPACAH) is a zinc-finger region. The Required for filament formation motif lies at 825–826 (FW). The segment at 1151-1175 (KRPPPEDDLFDMGAPPEKRLTFDML) is required for nuclear localization.

It belongs to the herpesviridae major DNA-binding protein family. In terms of assembly, homooligomers. Forms double-helical filaments necessary for the formation of replication compartments within the host nucleus. Interacts with the origin-binding protein. Interacts with the helicase primase complex; this interaction stimulates primer synthesis activity of the helicase-primase complex. Interacts with the DNA polymerase. Interacts with the alkaline exonuclease; this interaction increases its nuclease processivity.

Its subcellular location is the host nucleus. Functionally, plays several crucial roles in viral infection. Participates in the opening of the viral DNA origin to initiate replication by interacting with the origin-binding protein. May disrupt loops, hairpins and other secondary structures present on ssDNA to reduce and eliminate pausing of viral DNA polymerase at specific sites during elongation. Promotes viral DNA recombination by performing strand-transfer, characterized by the ability to transfer a DNA strand from a linear duplex to a complementary single-stranded DNA circle. Can also catalyze the renaturation of complementary single strands. Additionally, reorganizes the host cell nucleus, leading to the formation of prereplicative sites and replication compartments. This process is driven by the protein which can form double-helical filaments in the absence of DNA. The sequence is that of Major DNA-binding protein from Suid herpesvirus 1 (SuHV-1).